Reading from the N-terminus, the 891-residue chain is Echinoderm microtubule-associated protein-like elp-1 (891 aa).

Positions 77-88 (DQSRSPTCSGYS) are enriched in polar residues. The disordered stretch occupies residues 77 to 167 (DQSRSPTCSG…ARGSPMRKWV (91 aa)). Positions 104–117 (SPSHAPPRSSHANS) are enriched in low complexity. Over residues 118 to 131 (KSLYINGMNNNSEE) the composition is skewed to polar residues. WD repeat units lie at residues 330–401 (GHTC…TLMV), 404–447 (GFEK…REGE), 499–537 (DKPK…TTKQ), 541–579 (VHPG…RTRR), 626–664 (GDPG…VEFS), 708–747 (EGTA…NLLV), 753–792 (HIPA…CDGT), 816–853 (SSNG…VTAG), and 859–890 (GHGR…EWCL).

This sequence belongs to the WD repeat EMAP family.

It is found in the cytoplasm. The protein localises to the cytoskeleton. May modify the assembly dynamics of microtubules, such that microtubules are slightly longer, but more dynamic. This Caenorhabditis elegans protein is Echinoderm microtubule-associated protein-like elp-1 (elp-1).